We begin with the raw amino-acid sequence, 150 residues long: Peptide methionine sulfoxide reductase MsrB (150 aa).

Residues 9-132 (EAELKRTLTK…NSAALKFIPF (124 aa)) enclose the MsrB domain. The active-site Nucleophile is the Cys121.

It belongs to the MsrB Met sulfoxide reductase family.

The catalysed reaction is L-methionyl-[protein] + [thioredoxin]-disulfide + H2O = L-methionyl-(R)-S-oxide-[protein] + [thioredoxin]-dithiol. This Mycoplasma genitalium (strain ATCC 33530 / DSM 19775 / NCTC 10195 / G37) (Mycoplasmoides genitalium) protein is Peptide methionine sulfoxide reductase MsrB.